The following is a 325-amino-acid chain: Tetraacyldisaccharide 4'-kinase (325 aa).

53 to 60 (SVGGNGKT) lines the ATP pocket.

The protein belongs to the LpxK family.

It catalyses the reaction a lipid A disaccharide + ATP = a lipid IVA + ADP + H(+). It functions in the pathway glycolipid biosynthesis; lipid IV(A) biosynthesis; lipid IV(A) from (3R)-3-hydroxytetradecanoyl-[acyl-carrier-protein] and UDP-N-acetyl-alpha-D-glucosamine: step 6/6. Its function is as follows. Transfers the gamma-phosphate of ATP to the 4'-position of a tetraacyldisaccharide 1-phosphate intermediate (termed DS-1-P) to form tetraacyldisaccharide 1,4'-bis-phosphate (lipid IVA). This chain is Tetraacyldisaccharide 4'-kinase, found in Pasteurella multocida (strain Pm70).